The sequence spans 305 residues: Acetylglutamate kinase (305 aa).

Residues 67-68, arginine 89, and asparagine 190 contribute to the substrate site; that span reads GG.

Belongs to the acetylglutamate kinase family. ArgB subfamily.

It is found in the cytoplasm. It carries out the reaction N-acetyl-L-glutamate + ATP = N-acetyl-L-glutamyl 5-phosphate + ADP. Its pathway is amino-acid biosynthesis; L-arginine biosynthesis; N(2)-acetyl-L-ornithine from L-glutamate: step 2/4. Functionally, catalyzes the ATP-dependent phosphorylation of N-acetyl-L-glutamate. This Bifidobacterium longum subsp. infantis (strain ATCC 15697 / DSM 20088 / JCM 1222 / NCTC 11817 / S12) protein is Acetylglutamate kinase.